The sequence spans 139 residues: Putative truncated protein trichome birefringence-like 46 (139 aa).

Belongs to the PC-esterase family. TBL subfamily.

The sequence is that of Putative truncated protein trichome birefringence-like 46 (TBL46) from Arabidopsis thaliana (Mouse-ear cress).